A 131-amino-acid chain; its full sequence is Guanyl-specific ribonuclease F1 (131 aa).

An N-terminal signal peptide occupies residues 1-25 (MLFFKSIASLAALVSLAVASPIESR). Q26 is subject to Pyrrolidone carboxylic acid. Intrachain disulfides connect C31/C127 and C49/C108. The active site involves H65. The active-site Proton acceptor is the E83. H116 acts as the Proton donor in catalysis.

It belongs to the ribonuclease N1/T1 family.

The enzyme catalyses [RNA] containing guanosine + H2O = an [RNA fragment]-3'-guanosine-3'-phosphate + a 5'-hydroxy-ribonucleotide-3'-[RNA fragment].. The protein is Guanyl-specific ribonuclease F1 of Fusarium fujikuroi (Bakanae and foot rot disease fungus).